The primary structure comprises 1486 residues: Homeobox protein cut-like 2 (1486 aa).

Residues 114 to 167 (DRLQPPSFDPSGQPRRDLHTSWKRNPELLSPKEQREGTSPAGPTLTEGSRLPGI) form a disordered region. Basic and acidic residues predominate over residues 127-149 (PRRDLHTSWKRNPELLSPKEQRE). At Ser-143 the chain carries Phosphoserine. Residues 195–374 (TLAARLGEAE…IKTELSILKA (180 aa)) adopt a coiled-coil conformation. Disordered stretches follow at residues 415-481 (LLAS…LSPF), 517-549 (PTAP…PGAE), 661-690 (EIES…STSE), 716-758 (VAPR…AQAP), 800-858 (YASV…EGAT), and 964-1032 (GQAV…SGSQ). The span at 419–428 (PEEDPSEDDS) shows a compositional bias: acidic residues. Pro residues predominate over residues 443-460 (QQLPPPPGPEDPLSPSPG). Residues 461–470 (QPLLGPSLGP) are compositionally biased toward low complexity. Positions 517 to 532 (PTAPATPAPGPEPLGG) are enriched in pro residues. The CUT 1 DNA-binding region spans 544-631 (AGPGAEEEQL…VLALRTIQVR (88 aa)). Positions 680-690 (ANGTTPASTSE) are enriched in polar residues. Residues 690-717 (EDAIKSILEQARREMQAQQQALLEMEVA) adopt a coiled-coil conformation. The segment covering 802–816 (SVSPSLSSSSSSGYS) has biased composition (low complexity). A compositionally biased stretch (acidic residues) spans 834 to 844 (PEDEAAAGAED). A compositionally biased stretch (basic and acidic residues) spans 845–854 (EPPRTGELKA). Positions 887–974 (QYELYMYREV…QAVGQQPGAS (88 aa)) form a DNA-binding region, CUT 2. The span at 967 to 976 (VGQQPGASQA) shows a compositional bias: polar residues. The segment covering 1017–1031 (GRSSSSLSGKMYSGS) has biased composition (low complexity). The CUT 3 DNA-binding region spans 1038–1125 (QEIVAMSPEL…VEKLRDMKKL (88 aa)). Positions 1168–1227 (IKKPRVVLAPEEKEALRKAYQLEPYPSQQTIELLSFQLNLKTNTVINWFHNYRSRMRREM) form a DNA-binding region, homeobox. The interval 1231-1453 (GTQDEPDLDP…ALHPSAKVNP (223 aa)) is disordered. Over residues 1266 to 1276 (EDQKPTVKELE) the composition is skewed to basic and acidic residues. Positions 1283–1293 (ENSTPLTTQDK) are enriched in polar residues. Residues 1320–1334 (ELDKGQGPPKEEHPD) show a composition bias toward basic and acidic residues. Over residues 1381–1401 (KSASESSRCSLEVSLNSPSAA) the composition is skewed to polar residues. Low complexity predominate over residues 1402–1420 (SSPGLMMSVSPVPSSSAPI). Pro residues predominate over residues 1421–1431 (SPSPPGAPPAK).

It belongs to the CUT homeobox family.

It is found in the nucleus. Transcription factor involved in the control of neuronal proliferation and differentiation in the brain. Regulates dendrite development and branching, dendritic spine formation, and synaptogenesis in cortical layers II-III. Binds to DNA in a sequence-specific manner. This is Homeobox protein cut-like 2 (CUX2) from Homo sapiens (Human).